A 289-amino-acid polypeptide reads, in one-letter code: ATP synthase gamma chain (289 aa).

The protein belongs to the ATPase gamma chain family. As to quaternary structure, F-type ATPases have 2 components, CF(1) - the catalytic core - and CF(0) - the membrane proton channel. CF(1) has five subunits: alpha(3), beta(3), gamma(1), delta(1), epsilon(1). CF(0) has three main subunits: a, b and c.

It localises to the cell inner membrane. Functionally, produces ATP from ADP in the presence of a proton gradient across the membrane. The gamma chain is believed to be important in regulating ATPase activity and the flow of protons through the CF(0) complex. The chain is ATP synthase gamma chain from Erwinia tasmaniensis (strain DSM 17950 / CFBP 7177 / CIP 109463 / NCPPB 4357 / Et1/99).